The primary structure comprises 312 residues: Olfactory receptor 5p57 (312 aa).

The Extracellular segment spans residues 1–25; sequence MEPGNYTVVTEFILLGLTDDITVSV. Asparagine 5 carries an N-linked (GlcNAc...) asparagine glycan. A helical transmembrane segment spans residues 26–46; the sequence is ILFVMFLIVYSVTLMGNLNII. The Cytoplasmic portion of the chain corresponds to 47–54; the sequence is VLIRTSPQ. A helical membrane pass occupies residues 55–75; it reads LHTPMYLFLSHLAFLDIGYSS. At 76–99 the chain is on the extracellular side; it reads SVTPIMLRGFLRKGTFIPVAGCVA. An intrachain disulfide couples cysteine 97 to cysteine 189. A helical transmembrane segment spans residues 100 to 120; the sequence is QLCIVVAFGTSESFLLASMAY. Residues 121–133 lie on the Cytoplasmic side of the membrane; the sequence is DRYVAICSPLLYS. The chain crosses the membrane as a helical span at residues 134–154; that stretch reads TQMSSTVCILLVGTSYLGGWV. Residues 155 to 196 lie on the Extracellular side of the membrane; the sequence is NAWIFTGCSLNLSFCGPNKINHFFCDYSPLLKLSCSHDFSFE. Asparagine 165 is a glycosylation site (N-linked (GlcNAc...) asparagine). A helical transmembrane segment spans residues 197-217; the sequence is VIPAISSGSIIVVTVFIIALS. Over 218-237 the chain is Cytoplasmic; that stretch reads YVYILVSILKMRSTEGRQKA. A helical transmembrane segment spans residues 238 to 258; it reads FSTCTSHLTAVTLFFGTITFI. The Extracellular segment spans residues 259-271; that stretch reads YVMPQSSYSTDQN. A helical transmembrane segment spans residues 272–292; that stretch reads KVVSVFYTVVIPMLNPLIYSF. Over 293–312 the chain is Cytoplasmic; it reads RNKEVKEAMKKLIAKTHWWS.

The protein belongs to the G-protein coupled receptor 1 family.

Its subcellular location is the cell membrane. Its function is as follows. Probable odorant receptor, which recognizes only aliphatic alcohols, suggesting that it may convey a 'woody' or 'sweet' sour. The protein is Olfactory receptor 5p57 of Mus musculus (Mouse).